Reading from the N-terminus, the 223-residue chain is ATP synthase subunit a 1 (223 aa).

A run of 5 helical transmembrane segments spans residues 20 to 40 (LTIATTWALMLVLVGGSAFAS), 78 to 98 (YLPYLGTLFIFIAFSNLCTII), 108 to 128 (LSTTAALAMSVFVAVPLFGIA), 174 to 194 (MILAILLTVTPFVFPVLMSVL), and 196 to 216 (LLTGMVQAYIFSILATVYISA).

Belongs to the ATPase A chain family. As to quaternary structure, F-type ATPases have 2 components, CF(1) - the catalytic core - and CF(0) - the membrane proton channel. CF(1) has five subunits: alpha(3), beta(3), gamma(1), delta(1), epsilon(1). CF(0) has four main subunits: a, b, b' and c.

Its subcellular location is the cell inner membrane. In terms of biological role, key component of the proton channel; it plays a direct role in the translocation of protons across the membrane. The protein is ATP synthase subunit a 1 of Chlorobium luteolum (strain DSM 273 / BCRC 81028 / 2530) (Pelodictyon luteolum).